The following is a 501-amino-acid chain: Glycerol kinase (501 aa).

Residue threonine 17 participates in ADP binding. Threonine 17, threonine 18, and serine 19 together coordinate ATP. Threonine 17 contacts sn-glycerol 3-phosphate. ADP is bound at residue arginine 21. 4 residues coordinate sn-glycerol 3-phosphate: arginine 87, glutamate 88, tyrosine 139, and aspartate 243. The glycerol site is built by arginine 87, glutamate 88, tyrosine 139, aspartate 243, and glutamine 244. ADP contacts are provided by threonine 265 and glycine 308. Positions 265, 308, 312, and 409 each coordinate ATP. Positions 409 and 413 each coordinate ADP.

This sequence belongs to the FGGY kinase family.

The enzyme catalyses glycerol + ATP = sn-glycerol 3-phosphate + ADP + H(+). It functions in the pathway polyol metabolism; glycerol degradation via glycerol kinase pathway; sn-glycerol 3-phosphate from glycerol: step 1/1. With respect to regulation, inhibited by fructose 1,6-bisphosphate (FBP). Key enzyme in the regulation of glycerol uptake and metabolism. Catalyzes the phosphorylation of glycerol to yield sn-glycerol 3-phosphate. In Pseudomonas savastanoi pv. phaseolicola (strain 1448A / Race 6) (Pseudomonas syringae pv. phaseolicola (strain 1448A / Race 6)), this protein is Glycerol kinase.